We begin with the raw amino-acid sequence, 386 residues long: Sulfate adenylyltransferase (386 aa).

It belongs to the sulfate adenylyltransferase family.

It catalyses the reaction sulfate + ATP + H(+) = adenosine 5'-phosphosulfate + diphosphate. Its pathway is sulfur metabolism; hydrogen sulfide biosynthesis; sulfite from sulfate: step 1/3. This chain is Sulfate adenylyltransferase, found in Persephonella marina (strain DSM 14350 / EX-H1).